A 462-amino-acid polypeptide reads, in one-letter code: MASSRTGAGAGGRVVVFPFPFQGHFNPVMRLARALHARGLAITVFHSGALDPADYPADYRFVPVTVEADPKLLASEDIAAIVTTLNASCDAPFRARLSALLAAEGRDSVRCVFTDVSWNAVLTASSDLGVPALGMMTASAASLRDYMAYRTLIDKGYLPVKEERKEDPVPELPPYLVKDLLRVDTSDLEEFAELLARTVTAARRASGLIFNTFPLIETDTLAEIHKALSVPVFAVAPLNKLVPTATASLHGVVQADRGCLQWLDTQQPGSVLYVSFGSMAAMDPHEFVELAWGLADSKRPFVWVVRPNLIRGFESGALPDGVEDEVRGRGIVVAWAPQEEVLAHPAVGGFLTHNGWNSTVEAISEGVPMVCCPRHGDQFGNMRYVCDVWKVGTELVGEQLERGQVKAAIDRLFGTKEGEEIKERMKEFKIAAAKGIGIGVDVDETASPRTDLTDLVDLIKSF.

The Proton acceptor role is filled by His24. An anthocyanidin is bound at residue His24. Asp115 acts as the Charge relay in catalysis. UDP-alpha-D-glucose-binding residues include Thr137, Ala336, Gln338, His353, Trp356, Asn357, Ser358, and Glu361. Gly376 serves as a coordination point for an anthocyanidin. Positions 377 and 378 each coordinate UDP-alpha-D-glucose.

It belongs to the UDP-glycosyltransferase family. Mg(2+) serves as cofactor. Ca(2+) is required as a cofactor. In terms of tissue distribution, expressed at the same levels in roots and shoots.

The enzyme catalyses DIMBOA + UDP-alpha-D-glucose = DIMBOA beta-D-glucoside + UDP + H(+). It catalyses the reaction DIBOA + UDP-alpha-D-glucose = DIBOA beta-D-glucoside + UDP + H(+). In terms of biological role, glucosyltransferase involved in the last step of benzoxazinoid glucoside biosynthesis. Catalyzes the glucosylation of hydroxamic acids utilizing UDP-glucose as glucose doner, reducing the toxicity of these natural insecticides for storage. Can use DIMBOA and DIBOA as substrates, HMBOA (2-hydroxy-7-methoxy-2H-1,4-benzoxazin-3(4H)-one) and HBOA (2-hydroxy-2H-1,4-benzoxazin-3(4H)-one) with a lower efficiency, but not indole acetic acid or quercitin. The chain is DIMBOA UDP-glucosyltransferase BX9 (BX9) from Zea mays (Maize).